The following is a 223-amino-acid chain: Cutinase (223 aa).

Positions 1-19 (MKFFAFSMLIGEASPIVLA) are cleaved as a signal peptide. Cys46 and Cys124 are joined by a disulfide. Ser135 (nucleophile) is an active-site residue. Cys185 and Cys192 form a disulfide bridge. Asp189 is a catalytic residue. His202 acts as the Proton donor/acceptor in catalysis.

It belongs to the cutinase family. Post-translationally, the 2 disulfide bonds play a critical role in holding the catalytic residues in juxta-position; reduction of the disulfide bridges results in the complete inactivation of the enzyme.

Its subcellular location is the secreted. It carries out the reaction cutin + H2O = cutin monomers.. Catalyzes the hydrolysis of complex carboxylic polyesters found in the cell wall of plants. Degrades cutin, a macromolecule that forms the structure of the plant cuticle. Allows pathogenic fungi to penetrate through the cuticular barrier into the host plant during the initial stage of fungal infection. The polypeptide is Cutinase (CUT) (Didymella rabiei (Chickpea ascochyta blight fungus)).